A 722-amino-acid chain; its full sequence is Probable dipeptidyl-peptidase 5 (722 aa).

A signal peptide spans 1–18; that stretch reads MGALRWLSLAAAASSALA. Residues Asn75, Asn78, Asn86, Asn94, Asn151, Asn253, and Asn448 are each glycosylated (N-linked (GlcNAc...) asparagine). Ser558 (charge relay system) is an active-site residue. Asn605 carries N-linked (GlcNAc...) asparagine glycosylation. Catalysis depends on charge relay system residues Asp641 and His673.

This sequence belongs to the peptidase S9C family.

It localises to the secreted. In terms of biological role, extracellular dipeptidyl-peptidase which removes N-terminal dipeptides sequentially from polypeptides having unsubstituted N-termini. The polypeptide is Probable dipeptidyl-peptidase 5 (dpp5) (Emericella nidulans (strain FGSC A4 / ATCC 38163 / CBS 112.46 / NRRL 194 / M139) (Aspergillus nidulans)).